Here is a 132-residue protein sequence, read N- to C-terminus: MKTNKLYECTAIIDGGLQDEAVAATLAMVQRVITEKGGTINSVLDLGRRKTAYPIKKKSMGYYVHIEFNAAAPVIAEIERVLRYEEELLRYLIIQLTTPLLEMRKRVEKYSVVLGSVEEGASTSGDAEGSNE.

This sequence belongs to the bacterial ribosomal protein bS6 family.

In terms of biological role, binds together with bS18 to 16S ribosomal RNA. The polypeptide is Small ribosomal subunit protein bS6 (Chlorobium chlorochromatii (strain CaD3)).